A 235-amino-acid polypeptide reads, in one-letter code: Transmembrane emp24 domain-containing protein 9 (235 aa).

An N-terminal signal peptide occupies residues 1-37 (MAAVRGVRVVGTSPGLLLGRGMRAFLLLLCLAARGGA). Topologically, residues 38-202 (LYFHIGETEK…RQTSESTNQR (165 aa)) are lumenal. The region spanning 47–145 (KKCFIEEIPD…MLRVHLDIQV (99 aa)) is the GOLD domain. The tract at residues 121-160 (CLHSNSTKFSLFAGGMLRVHLDIQVGEHANDYAEIAAKDK) is required for interaction with STX17. An N-linked (GlcNAc...) asparagine glycan is attached at Asn125. Residues 154–184 (EIAAKDKLSELQLRVRQLVEQVEQIQKEQNY) are a coiled coil. N6-acetyllysine is present on Lys160. A helical membrane pass occupies residues 203–222 (VLWWSILQTLILVAIGVWQM). Over 223–235 (RHLKSFFEAKKLV) the chain is Cytoplasmic. A COPII vesicle coat-binding motif is present at residues 228–229 (FF). Residues 228–235 (FFEAKKLV) carry the COPI vesicle coat-binding motif.

This sequence belongs to the EMP24/GP25L family. Monomer and homodimer in endoplasmic reticulum. Predominantly monomeric and to lesser extent homodimeric in endoplasmic reticulum-Golgi intermediate compartment and cis-Golgi network. Probably oligomerizes with other members of the EMP24/GP25L family such as TMED2, TMED7 and TMED10. Interacts with TMED5. Interacts (via C-terminus) with COPG1; the interaction involves dimeric TMED9. Interacts with PTPN2 and SPAST. Interacts with STX17; the interaction is direct. N-linked glycosylated containing high mannose.

Its subcellular location is the endoplasmic reticulum membrane. The protein localises to the golgi apparatus. It localises to the cis-Golgi network membrane. It is found in the endoplasmic reticulum-Golgi intermediate compartment membrane. The protein resides in the trans-Golgi network membrane. Appears to be involved in vesicular protein trafficking, mainly in the early secretory pathway. In COPI vesicle-mediated retrograde transport involved in the coatomer recruitment to membranes of the early secretory pathway. Increases coatomer-dependent activity of ARFGAP2. Thought to play a crucial role in the specific retention of p24 complexes in cis-Golgi membranes; specifically contributes to the coupled localization of TMED2 and TMED10 in the cis-Golgi network. May be involved in organization of intracellular membranes, such as of the ER-Golgi intermediate compartment and the Golgi apparatus. Involved in ER localization of PTPN2. This is Transmembrane emp24 domain-containing protein 9 (Tmed9) from Rattus norvegicus (Rat).